We begin with the raw amino-acid sequence, 736 residues long: Catalase-1 (736 aa).

Positions 1–29 are disordered; it reads MSNIISQAGQKAKEALTSAPSSKKVDDLK. Position 89 (R89) interacts with heme. The active site involves H92. R129 provides a ligand contact to heme. Residue N165 is part of the active site. Heme is bound by residues F178, R375, Y379, and R386. Residues 356 to 379 constitute a cross-link (3-(S-cysteinyl)-tyrosine (Cys-Tyr)); the sequence is CTSHVVNGIGFSDDPLLQGRNFSY.

It belongs to the catalase family. Homotetramer. Requires heme as cofactor. Glycosylated; with alpha-glucose and/or alpha-mannose.

It is found in the secreted. The protein localises to the cell wall. The enzyme catalyses 2 H2O2 = O2 + 2 H2O. In terms of biological role, occurs in almost all aerobically respiring organisms and serves to protect cells from the toxic effects of hydrogen peroxide. The sequence is that of Catalase-1 (cat-1) from Neurospora crassa (strain ATCC 24698 / 74-OR23-1A / CBS 708.71 / DSM 1257 / FGSC 987).